Here is a 396-residue protein sequence, read N- to C-terminus: N-terminal EF-hand calcium-binding protein 3 (396 aa).

A compositionally biased stretch (pro residues) spans Pro14–Gly34. A disordered region spans residues Pro14–Ala36. One can recognise an EF-hand domain in the interval Ala36–Ser71. Ca(2+)-binding residues include Asp49, Asn51, Asp53, Lys55, and Glu60. A required for interaction with APBA3 region spans residues Val181–Ser190. Residues Ala197 to Ala220 form a disordered region. Positions Thr206–Ser217 are enriched in polar residues. Residues Leu296–Phe385 form the ABM domain.

As to quaternary structure, interacts with the N-terminal domain of APBA2. Interacts with NEK2. Interacts with APBA3; APBA3 seems to mediate the interaction between NECAB3 and HIF1AN. Post-translationally, phosphorylated by NEK2. Strongly expressed in heart and skeletal muscle, moderately in brain and pancreas.

The protein resides in the golgi apparatus. Inhibits the interaction of APBA2 with amyloid-beta precursor protein (APP), and hence allows formation of amyloid-beta. May enhance the activity of HIF1A and thus promote glycolysis under normoxic conditions; the function requires its ABM domain and may implicate the stabilization of the interaction between HIF1AN and APBA3. The chain is N-terminal EF-hand calcium-binding protein 3 (NECAB3) from Homo sapiens (Human).